The primary structure comprises 239 residues: MEINKKKILVVDDEISIRRILETRLSMIGYEVVTAADGEEALTIFQLEHPNLVVLDVMMPKLDGYGVCQELRKESDIPIIMLTALGDVADRITGLELGADDYVVKPFSPKELEARIRSLLRRTENPTLSTTSTNGENLQIGFLKIDINKRQVFKNGERIRLTGMEFSLLELLISKMGEPFSRAQILQEVWGYTPERHIDTRVVDVHISRLRSKLEENPSNPDLILTARGIGYLFQNTSN.

Residues 7-120 (KILVVDDEIS…ELEARIRSLL (114 aa)) form the Response regulatory domain. Asp-56 is subject to 4-aspartylphosphate. Residues 76-94 (DIPIIMLTALGDVADRITG) constitute a DNA-binding region (H-T-H motif). Residues 135–236 (GENLQIGFLK…ARGIGYLFQN (102 aa)) constitute a DNA-binding region (ompR/PhoB-type).

Its subcellular location is the plastid. It localises to the cyanelle. Its function is as follows. Probable promoter-specific protein mediating the interaction between DNA and RNA polymerase. This chain is Probable transcriptional regulator ycf27 (ycf27), found in Cyanophora paradoxa.